A 1721-amino-acid chain; its full sequence is Ras guanine nucleotide exchange factor R (1721 aa).

Residues 148 to 279 adopt a coiled-coil conformation; the sequence is QLEDEVDLVH…LQQQQQQQRS (132 aa). 6 disordered regions span residues 213–232, 445–515, 551–701, 716–766, 797–837, and 929–981; these read QQQKHQEEKEKNDQKEKEEK, SSLG…NQQP, ATTT…VDKQ, RTPL…KSPS, TITI…TPNK, and DEVS…DPVS. A compositionally biased stretch (basic and acidic residues) spans 216 to 232; it reads KHQEEKEKNDQKEKEEK. Composition is skewed to low complexity over residues 454–469, 479–493, 501–515, and 551–581; these read SPEKSISPSFTSSTSE, HNNNNNNYNNSSTNN, PSLSSNHSQQPNQQP, and ATTTTTTATSPSTSTSTSTSTSPNSSSLSIS. Positions 618-627 are enriched in polar residues; it reads NGTTSPRNNE. Low complexity-rich tracts occupy residues 628 to 651 and 663 to 686; these read SSVTAATTTTTSTTASITTNVNTI and TPTTGTPSTSTPTPQTPTSTSQND. A compositionally biased stretch (basic and acidic residues) spans 687-701; it reads KQNENNNKENFVDKQ. Low complexity-rich tracts occupy residues 724 to 748, 797 to 836, and 933 to 952; these read SSNSSSPSNNSNTTNSSSHSSTNSS, TITINNNNNNNNNNNNNNNNNNNNIQQQQQQQQQIPTTPN, and ESSSSSSSSTTSPNNINTPS. Positions 802 to 831 form a coiled coil; it reads NNNNNNNNNNNNNNNNNNNIQQQQQQQQQI. Residues 968–978 show a composition bias toward polar residues; that stretch reads NLSSINNSSYD. Positions 1291–1411 constitute an N-terminal Ras-GEF domain; sequence GRYVPKAGTL…ILGGLIKKKE (121 aa). Residues 1447–1676 form the Ras-GEF domain; the sequence is NESEIARQLT…YQLSLIREPR (230 aa).

Phosphorylated on threonine residues.

Promotes the exchange of Ras-bound GDP by GTP. May also play a role in the activation of rasG. This chain is Ras guanine nucleotide exchange factor R (gefR), found in Dictyostelium discoideum (Social amoeba).